Reading from the N-terminus, the 201-residue chain is Small ribosomal subunit protein uS4c (201 aa).

Positions 89–151 (MRLDNILFRL…QKSKTLIQNY (63 aa)) constitute an S4 RNA-binding domain.

It belongs to the universal ribosomal protein uS4 family. In terms of assembly, part of the 30S ribosomal subunit. Contacts protein S5. The interaction surface between S4 and S5 is involved in control of translational fidelity.

Its subcellular location is the plastid. It localises to the chloroplast. Functionally, one of the primary rRNA binding proteins, it binds directly to 16S rRNA where it nucleates assembly of the body of the 30S subunit. Its function is as follows. With S5 and S12 plays an important role in translational accuracy. The chain is Small ribosomal subunit protein uS4c (rps4) from Phaseolus vulgaris (Kidney bean).